Consider the following 219-residue polypeptide: Cytidylate kinase (219 aa).

21 to 29 (GPAASGKGT) provides a ligand contact to ATP.

This sequence belongs to the cytidylate kinase family. Type 1 subfamily.

It is found in the cytoplasm. It carries out the reaction CMP + ATP = CDP + ADP. The enzyme catalyses dCMP + ATP = dCDP + ADP. The chain is Cytidylate kinase from Rickettsia felis (strain ATCC VR-1525 / URRWXCal2) (Rickettsia azadi).